We begin with the raw amino-acid sequence, 228 residues long: Endonuclease V (228 aa).

Residues aspartate 36 and aspartate 104 each contribute to the Mg(2+) site.

The protein belongs to the endonuclease V family. Requires Mg(2+) as cofactor.

It localises to the cytoplasm. The catalysed reaction is Endonucleolytic cleavage at apurinic or apyrimidinic sites to products with a 5'-phosphate.. In terms of biological role, DNA repair enzyme involved in the repair of deaminated bases. Selectively cleaves double-stranded DNA at the second phosphodiester bond 3' to a deoxyinosine leaving behind the intact lesion on the nicked DNA. This is Endonuclease V from Serratia proteamaculans (strain 568).